The following is a 566-amino-acid chain: ALBINO3-like protein 3, mitochondrial (566 aa).

Residues 1 to 44 constitute a mitochondrion transit peptide; that stretch reads MAFRRVLLSHLRRSHHTCSSLSPHHVSATTQPSIALALFQSRFF. 4 consecutive transmembrane segments (helical) span residues 139-159, 207-227, 249-269, and 301-321; these read WVVIATSTVAFRTALLPILIL, LWVPAYFSIQISCFFLWITSI, LTEIPNGLYGPLFPFLIAGLH, and LLTCALYFLSFQMPQGSLLYW. TPR repeat units follow at residues 386-419, 420-453, 465-498, and 507-540; these read PKELVALSAKYLSGGHKDKSIPLLRLALEKDPEY, LQAMIILGQALYQKDQFAEAAKCLEQAASKLLDT, IVASQWAGVSNIRQGKTSEGITHLERVANMKEPD, and LDALVLYSSAIFNEGRREEAAKYLRRVVAYDPSF. Residues 547-566 are disordered; that stretch reads CEEDDTIPTSSSSNSTSKTS. Residues 555–566 are compositionally biased toward low complexity; it reads TSSSSNSTSKTS.

Belongs to the OXA1/ALB3/YidC (TC 2.A.9.2) family.

The protein localises to the mitochondrion inner membrane. Probably required for the insertion of integral membrane proteins into the mitochondrial inner membrane. This is ALBINO3-like protein 3, mitochondrial (ALB3L3) from Arabidopsis thaliana (Mouse-ear cress).